The chain runs to 487 residues: Cyclic AMP-dependent transcription factor ATF-2 (487 aa).

The segment at 7-31 adopts a C2H2-type zinc-finger fold; that stretch reads FLCTAPGCGQRFTNEDHLAVHKHKH. Thr34 is subject to Phosphothreonine; by PKC/PRKCH. Ser44 is modified (phosphoserine; by VRK1). Phosphothreonine is present on residues Thr51 and Thr53. At Thr55 the chain carries Phosphothreonine; by VRK1. A phosphoserine mark is found at Ser72 and Ser94. Thr98 is subject to Phosphothreonine. The residue at position 103 (Ser103) is a Phosphoserine; by PKC/PRKCA and PKC/PRKCB. Disordered regions lie at residues 107 to 130 and 241 to 355; these read EPSV…TNDE and PGIP…RQKR. Ser118 is modified (phosphoserine). Over residues 264 to 275 the composition is skewed to polar residues; that stretch reads LTQQHPPVTNGD. Positions 278–281 are essential for its histone acetyltransferase activity; the sequence is KGHG. A compositionally biased stretch (low complexity) spans 300 to 316; that stretch reads PATSTTETPASPAHTTP. The residue at position 310 (Ser310) is a Phosphoserine. Ser322 carries the post-translational modification Phosphoserine; by PKC/PRKCA and PKC/PRKCB. Positions 328–345 are enriched in basic and acidic residues; it reads AANEDPDEKRRKFLERNR. In terms of domain architecture, bZIP spans 334–397; it reads DEKRRKFLER…AQLKQLLLAH (64 aa). Residues 336-356 form a basic motif region; the sequence is KRRKFLERNRAAASRCRQKRK. An N6-acetyllysine modification is found at Lys339. Ser349 carries the post-translational modification Phosphoserine; by PKC/PRKCA and PKC/PRKCB. Lys356 is subject to N6-acetyllysine. Positions 362–390 are leucine-zipper; it reads LEKKAEDLSSLNGQLQSEVTLLRNEVAQL. The Nuclear export signal motif lies at 387–396; that stretch reads VAQLKQLLLA. The disordered stretch occupies residues 407 to 487; that stretch reads KKSGYHTADK…PSSQAQPSGS (81 aa). Phosphoserine occurs at positions 424 and 428. Residues 425 to 436 show a composition bias toward polar residues; it reads VPSSPHTEAIQH. The segment covering 437-449 has biased composition (low complexity); it reads SSVSTSNGVSSTS. Over residues 457–470 the composition is skewed to polar residues; that stretch reads SVLTQMADQSTEPA. Phosphoserine; by ATM is present on residues Ser472 and Ser480. Residues 478–487 show a composition bias toward polar residues; the sequence is PSSQAQPSGS.

This sequence belongs to the bZIP family. ATF subfamily. In terms of assembly, binds DNA as a dimer and can form a homodimer in the absence of DNA. Can form a heterodimer with JUN. Heterodimerization is essential for its transcriptional activity. Interacts with SMAD3 and SMAD4. Binds through its N-terminal region to UTF1 which acts as a coactivator of ATF2 transcriptional activity. Interacts with the HK1/VDAC1 complex. Interacts with NBN, MRE11, XPO1, KAT5 and CUL3. In terms of processing, phosphorylation of Thr-51 by MAPK14 and MAPK11, and at Thr-53 by MAPK1/ERK2, MAPK3/ERK1, MAPK11, MAPK12 and MAPK14 in response to external stimulus like insulin causes increased transcriptional activity. Phosphorylated by PLK3 following hyperosmotic stress. Also phosphorylated and activated by JNK and CaMK4. ATM-mediated phosphorylation at Ser-472 and Ser-480 stimulates its function in DNA damage response. Phosphorylation at Ser-44, Thr-55 and Ser-103 activates its transcriptional activity. Phosphorylation at Thr-51 or Thr-53 enhances acetylation of histones H2B and H4.

The protein resides in the nucleus. It is found in the cytoplasm. It localises to the mitochondrion outer membrane. Its function is as follows. Transcriptional activator which regulates the transcription of various genes, including those involved in anti-apoptosis, cell growth, and DNA damage response. Dependent on its binding partner, binds to CRE (cAMP response element) consensus sequences (5'-TGACGTCA-3') or to AP-1 (activator protein 1) consensus sequences (5'-TGACTCA-3'). In the nucleus, contributes to global transcription and the DNA damage response, in addition to specific transcriptional activities that are related to cell development, proliferation and death. In the cytoplasm, interacts with and perturbs HK1- and VDAC1-containing complexes at the mitochondrial outer membrane, thereby impairing mitochondrial membrane potential, inducing mitochondrial leakage and promoting cell death. The phosphorylated form (mediated by ATM) plays a role in the DNA damage response and is involved in the ionizing radiation (IR)-induced S phase checkpoint control and in the recruitment of the MRN complex into the IR-induced foci (IRIF). Exhibits histone acetyltransferase (HAT) activity which specifically acetylates histones H2B and H4 in vitro. In concert with CUL3 and RBX1, promotes the degradation of KAT5 thereby attenuating its ability to acetylate and activate ATM. Can elicit oncogenic or tumor suppressor activities depending on the tissue or cell type. The chain is Cyclic AMP-dependent transcription factor ATF-2 (Atf2) from Rattus norvegicus (Rat).